The sequence spans 206 residues: Large ribosomal subunit protein uL4 (206 aa).

The protein belongs to the universal ribosomal protein uL4 family. Part of the 50S ribosomal subunit.

One of the primary rRNA binding proteins, this protein initially binds near the 5'-end of the 23S rRNA. It is important during the early stages of 50S assembly. It makes multiple contacts with different domains of the 23S rRNA in the assembled 50S subunit and ribosome. In terms of biological role, forms part of the polypeptide exit tunnel. The protein is Large ribosomal subunit protein uL4 of Bradyrhizobium diazoefficiens (strain JCM 10833 / BCRC 13528 / IAM 13628 / NBRC 14792 / USDA 110).